The primary structure comprises 474 residues: Bifunctional protein HldE (474 aa).

The tract at residues 1–318 is ribokinase; that stretch reads MKLSMPRFDQ…RAIQREEGSE (318 aa). 194 to 197 is an ATP binding site; that stretch reads NLSE. The active site involves aspartate 263. Positions 343-474 are cytidylyltransferase; the sequence is FTNGCFDILH…AIVEKIRGQG (132 aa).

In the N-terminal section; belongs to the carbohydrate kinase PfkB family. This sequence in the C-terminal section; belongs to the cytidylyltransferase family. As to quaternary structure, homodimer.

It catalyses the reaction D-glycero-beta-D-manno-heptose 7-phosphate + ATP = D-glycero-beta-D-manno-heptose 1,7-bisphosphate + ADP + H(+). It carries out the reaction D-glycero-beta-D-manno-heptose 1-phosphate + ATP + H(+) = ADP-D-glycero-beta-D-manno-heptose + diphosphate. The protein operates within nucleotide-sugar biosynthesis; ADP-L-glycero-beta-D-manno-heptose biosynthesis; ADP-L-glycero-beta-D-manno-heptose from D-glycero-beta-D-manno-heptose 7-phosphate: step 1/4. It participates in nucleotide-sugar biosynthesis; ADP-L-glycero-beta-D-manno-heptose biosynthesis; ADP-L-glycero-beta-D-manno-heptose from D-glycero-beta-D-manno-heptose 7-phosphate: step 3/4. Catalyzes the phosphorylation of D-glycero-D-manno-heptose 7-phosphate at the C-1 position to selectively form D-glycero-beta-D-manno-heptose-1,7-bisphosphate. In terms of biological role, catalyzes the ADP transfer from ATP to D-glycero-beta-D-manno-heptose 1-phosphate, yielding ADP-D-glycero-beta-D-manno-heptose. The polypeptide is Bifunctional protein HldE (Pseudomonas syringae pv. tomato (strain ATCC BAA-871 / DC3000)).